The following is a 238-amino-acid chain: uncharacterized protein (238 aa).

Helical transmembrane passes span 15–37, 50–69, 79–96, 101–118, 128–150, 163–183, and 203–225; these read FGALHFAIASVAVLLSALFVLLP, ARAGVAILFLRLGLMLCGTL, LPFHLCPAALISGSLYFI, IFFNLLYFWHFGSFVAVL, ILYAYLFMLTHCLEPAMVVFSLL, CAVLGFLLLAANALFWNRRLG, and FFVYQLLFVSALCLLMLVLYLPF.

Its subcellular location is the cell membrane. This is an uncharacterized protein from Treponema pallidum (strain Nichols).